The sequence spans 203 residues: Peptidyl-tRNA hydrolase (203 aa).

Tyr26 is a tRNA binding site. Residue His31 is the Proton acceptor of the active site. TRNA is bound by residues Tyr82, Asn84, and Asn130.

This sequence belongs to the PTH family. Monomer.

It is found in the cytoplasm. It catalyses the reaction an N-acyl-L-alpha-aminoacyl-tRNA + H2O = an N-acyl-L-amino acid + a tRNA + H(+). Hydrolyzes ribosome-free peptidyl-tRNAs (with 1 or more amino acids incorporated), which drop off the ribosome during protein synthesis, or as a result of ribosome stalling. Functionally, catalyzes the release of premature peptidyl moieties from peptidyl-tRNA molecules trapped in stalled 50S ribosomal subunits, and thus maintains levels of free tRNAs and 50S ribosomes. The polypeptide is Peptidyl-tRNA hydrolase (Streptomyces avermitilis (strain ATCC 31267 / DSM 46492 / JCM 5070 / NBRC 14893 / NCIMB 12804 / NRRL 8165 / MA-4680)).